The following is a 1471-amino-acid chain: ABC multidrug transporter F (1471 aa).

Over residues 1 to 19 (MALNSTDNRWSTGEDTPSE) the composition is skewed to polar residues. Residues 1 to 40 (MALNSTDNRWSTGEDTPSEAQLPDGEERLDAAPDEKVTAE) form a disordered region. A glycan (N-linked (GlcNAc...) asparagine) is linked at N4. Over residues 25–40 (GEERLDAAPDEKVTAE) the composition is skewed to basic and acidic residues. N71 and N311 each carry an N-linked (GlcNAc...) asparagine glycan. In terms of domain architecture, ABC transporter 1 spans 133 to 387 (LKVPTMVRQA…FEQLGFQCPE (255 aa)). A helical transmembrane segment spans residues 498-518 (VTLAMLIGNFFEALIIASIFY). N519 is a glycosylation site (N-linked (GlcNAc...) asparagine). 5 consecutive transmembrane segments (helical) span residues 532–552 (ALLF…ILTL), 578–598 (FIMS…TLYF), 607–627 (GPFF…SMFF), 641–661 (LAPS…TIPV), and 751–771 (IIIA…ELVA). The tract at residues 791–819 (RAKQGQRDEEQPSASAVPSEKYSEAPTPV) is disordered. In terms of domain architecture, ABC transporter 2 spans 829–1071 (FHWEDVCYDV…TLMDYFVRNG (243 aa)). N842 is a glycosylation site (N-linked (GlcNAc...) asparagine). 865–872 (GVSGAGKT) contacts ATP. Helical transmembrane passes span 1167–1187 (YLYS…FSFF), 1201–1221 (FGVF…IPTF), 1252–1272 (FAWN…PVGL), 1288–1308 (LVFL…HLLI), and 1326–1346 (IMMY…GFWI). N-linked (GlcNAc...) asparagine glycans are attached at residues N1386, N1422, and N1429. A helical membrane pass occupies residues 1441-1461 (FGLLWVYVAVNTFGAVFLYWL).

Belongs to the ABC transporter superfamily. ABCG family. PDR (TC 3.A.1.205) subfamily.

The protein localises to the cell membrane. It carries out the reaction fluconazole(in) + ATP + H2O = fluconazole(out) + ADP + phosphate + H(+). It catalyses the reaction itraconazole(in) + ATP + H2O = itraconazole(out) + ADP + phosphate + H(+). With respect to regulation, the efflux inhibitor FK506 impairs the transport activity. Its function is as follows. Pleiotropic ABC efflux transporter that shows a strong substrate specificity for the azole class of drugs such as lotrimazole (CLT), fluconazole (FLC), itraconazole (ITC), ketoconazole (KTC), posaconazole (POS), econazole (ECON), metconazole (MET), miconazole (MCZ), prochloraz (PCLZ), and tebuconazole (TEBZ). The sequence is that of ABC multidrug transporter F from Aspergillus fumigatus (strain ATCC MYA-4609 / CBS 101355 / FGSC A1100 / Af293) (Neosartorya fumigata).